The primary structure comprises 615 residues: 1-deoxy-D-xylulose-5-phosphate synthase (615 aa).

Residues His-76 and 117–119 (GHS) contribute to the thiamine diphosphate site. Asp-148 provides a ligand contact to Mg(2+). Residues 149–150 (GA), Asn-177, Tyr-284, and Glu-365 contribute to the thiamine diphosphate site. Asn-177 provides a ligand contact to Mg(2+).

This sequence belongs to the transketolase family. DXPS subfamily. In terms of assembly, homodimer. The cofactor is Mg(2+). Requires thiamine diphosphate as cofactor.

The enzyme catalyses D-glyceraldehyde 3-phosphate + pyruvate + H(+) = 1-deoxy-D-xylulose 5-phosphate + CO2. It functions in the pathway metabolic intermediate biosynthesis; 1-deoxy-D-xylulose 5-phosphate biosynthesis; 1-deoxy-D-xylulose 5-phosphate from D-glyceraldehyde 3-phosphate and pyruvate: step 1/1. Its function is as follows. Catalyzes the acyloin condensation reaction between C atoms 2 and 3 of pyruvate and glyceraldehyde 3-phosphate to yield 1-deoxy-D-xylulose-5-phosphate (DXP). The sequence is that of 1-deoxy-D-xylulose-5-phosphate synthase from Francisella tularensis subsp. mediasiatica (strain FSC147).